The following is a 309-amino-acid chain: Methionyl-tRNA formyltransferase (309 aa).

Residue serine 107–proline 110 coordinates (6S)-5,6,7,8-tetrahydrofolate.

The protein belongs to the Fmt family.

The catalysed reaction is L-methionyl-tRNA(fMet) + (6R)-10-formyltetrahydrofolate = N-formyl-L-methionyl-tRNA(fMet) + (6S)-5,6,7,8-tetrahydrofolate + H(+). Its function is as follows. Attaches a formyl group to the free amino group of methionyl-tRNA(fMet). The formyl group appears to play a dual role in the initiator identity of N-formylmethionyl-tRNA by promoting its recognition by IF2 and preventing the misappropriation of this tRNA by the elongation apparatus. The chain is Methionyl-tRNA formyltransferase from Borrelia hermsii (strain HS1 / DAH).